A 607-amino-acid polypeptide reads, in one-letter code: MNNEERLERQKNIRNFSIIAHIDHGKSTLADRILENTKSVETRDMQAQLLDSMDLERERGITIKLNAVKLKYEAKNGESYIFHLIDTPGHVDFSYEVSRSLAACEGAILVVDAAQGIEAQTLANVYLALDNDLELLPVVNKIDLPAAEPERVKQELEDVIGIDQDDVVLASAKSNIGIDEILEKIVETIPAPSGDPSAPLKALIFDSEYDPYRGVISSIRIVDGVVKAGDKIKMMASGKEFEVTEVGINTPKQLPVDELTVGDVGYITASIKNVDDSRVGDTITHADQPAEQPLKGYKKMNPMVYCGLFPIDNKKYNDLREALEKLQLNDASLEFEPETSQALGFGFRTGFLGMLHMEIIQERIEREFGIELIATAPSVIYECILKNGDKVIVDNPSKMPERDQIEEIYEPYVRATIMVPNDYVGAVMELCQRKRGQFINMDYLDDIRVNIIYDIPLSEVVFDFFDQIKSNTKGYASFDYELTGYKESNLVKMDILLNGDKVDALSFIVHKEFAYERGKALVERLKTLIPRQQFEVPVQAAVGQKIVARTNIKSMGKNVLSKCYGGDISRKRKLLEKQKAGKAKMKAVGNVEIPQDAFLAVLKMDED.

The tr-type G domain maps to 11–193 (KNIRNFSIIA…KIVETIPAPS (183 aa)). Residues 23 to 28 (DHGKST) and 140 to 143 (NKID) each bind GTP.

The protein belongs to the TRAFAC class translation factor GTPase superfamily. Classic translation factor GTPase family. LepA subfamily.

It is found in the cell membrane. It carries out the reaction GTP + H2O = GDP + phosphate + H(+). Its function is as follows. Required for accurate and efficient protein synthesis under certain stress conditions. May act as a fidelity factor of the translation reaction, by catalyzing a one-codon backward translocation of tRNAs on improperly translocated ribosomes. Back-translocation proceeds from a post-translocation (POST) complex to a pre-translocation (PRE) complex, thus giving elongation factor G a second chance to translocate the tRNAs correctly. Binds to ribosomes in a GTP-dependent manner. This chain is Elongation factor 4, found in Staphylococcus carnosus (strain TM300).